A 260-amino-acid polypeptide reads, in one-letter code: MNTTLTDSQLDRWNQTGYIKLPEFLSEAETQNLREWVEEISAWPADDEKWMHHFEQTPSGVRPARTEYILAFHAGIRQLLTQGKIPDCAGALMGEPAILYKEKINYKYPGGGGYAAHQDAPAYEFIRNHITCSIAVDAATPENGCLFFTPELHQRGLLHLDKNGCIDREYADTLDWEPVPMQPGDALFFSSYAPHKSPPNETQQPRRTLYLTYNALAEGDLREEYYADKRRSFAQVDTTGGEKLKISKIGHFDGKPAQQT.

K107 contributes to the 2-oxoglutarate binding site. 3 residues coordinate Fe cation: H117, D119, and H195.

The protein belongs to the PhyH family. It depends on Fe(2+) as a cofactor.

The catalysed reaction is methylphosphonate + 2-oxoglutarate + O2 = hydroxymethylphosphonate + succinate + CO2. Its function is as follows. Part of an oxidative pathway for utilization of methylphosphonic acid as a phosphate source. Catalyzes the conversion of methylphosphonic acid to hydroxymethylphosphonic acid. Is specific for the hydroxylation of methylphosphonate. The polypeptide is Methylphosphonate hydroxylase (Gimesia maris (strain ATCC 29201 / DSM 8797 / 534-30) (Planctomyces maris)).